We begin with the raw amino-acid sequence, 151 residues long: Deoxyuridine 5'-triphosphate nucleotidohydrolase (151 aa).

Substrate-binding positions include 70–72 (RSG), Asn83, and 87–89 (VID).

It belongs to the dUTPase family. Requires Mg(2+) as cofactor.

The enzyme catalyses dUTP + H2O = dUMP + diphosphate + H(+). It functions in the pathway pyrimidine metabolism; dUMP biosynthesis; dUMP from dCTP (dUTP route): step 2/2. This enzyme is involved in nucleotide metabolism: it produces dUMP, the immediate precursor of thymidine nucleotides and it decreases the intracellular concentration of dUTP so that uracil cannot be incorporated into DNA. The sequence is that of Deoxyuridine 5'-triphosphate nucleotidohydrolase from Desulfitobacterium hafniense (strain DSM 10664 / DCB-2).